The primary structure comprises 241 residues: Demethylmenaquinone methyltransferase (241 aa).

Residues Thr60, Asp81, and 106–107 (DA) contribute to the S-adenosyl-L-methionine site.

Belongs to the class I-like SAM-binding methyltransferase superfamily. MenG/UbiE family.

It carries out the reaction a 2-demethylmenaquinol + S-adenosyl-L-methionine = a menaquinol + S-adenosyl-L-homocysteine + H(+). The protein operates within quinol/quinone metabolism; menaquinone biosynthesis; menaquinol from 1,4-dihydroxy-2-naphthoate: step 2/2. Functionally, methyltransferase required for the conversion of demethylmenaquinol (DMKH2) to menaquinol (MKH2). This Staphylococcus aureus (strain MRSA252) protein is Demethylmenaquinone methyltransferase.